Consider the following 365-residue polypeptide: Putative glutamate--cysteine ligase 2-3 (365 aa).

It belongs to the glutamate--cysteine ligase type 2 family. YbdK subfamily.

It carries out the reaction L-cysteine + L-glutamate + ATP = gamma-L-glutamyl-L-cysteine + ADP + phosphate + H(+). In terms of biological role, ATP-dependent carboxylate-amine ligase which exhibits weak glutamate--cysteine ligase activity. This chain is Putative glutamate--cysteine ligase 2-3, found in Mycolicibacterium smegmatis (strain ATCC 700084 / mc(2)155) (Mycobacterium smegmatis).